The sequence spans 165 residues: Neurotrophin-3 (165 aa).

Positions 1–3 (IQS) are cleaved as a signal peptide. Positions 4 to 119 (TSMDQGSLTE…VLNRTSRRKR (116 aa)) are excised as a propeptide. An N-linked (GlcNAc...) asparagine glycan is attached at N112.

This sequence belongs to the NGF-beta family.

Its subcellular location is the secreted. In terms of biological role, seems to promote the survival of visceral and proprioceptive sensory neurons. The sequence is that of Neurotrophin-3 (NTF3) from Calabaria reinhardtii (Calabar boa).